Here is a 64-residue protein sequence, read N- to C-terminus: Large ribosomal subunit protein bL35 (64 aa).

A disordered region spans residues 1–20 (MKQKTHKGTAKRIKVTGSGK).

Belongs to the bacterial ribosomal protein bL35 family.

In Corynebacterium urealyticum (strain ATCC 43042 / DSM 7109), this protein is Large ribosomal subunit protein bL35.